A 292-amino-acid chain; its full sequence is ATP synthase gamma chain (292 aa).

It belongs to the ATPase gamma chain family. F-type ATPases have 2 components, CF(1) - the catalytic core - and CF(0) - the membrane proton channel. CF(1) has five subunits: alpha(3), beta(3), gamma(1), delta(1), epsilon(1). CF(0) has three main subunits: a, b and c.

It localises to the cell inner membrane. Produces ATP from ADP in the presence of a proton gradient across the membrane. The gamma chain is believed to be important in regulating ATPase activity and the flow of protons through the CF(0) complex. In Brucella ovis (strain ATCC 25840 / 63/290 / NCTC 10512), this protein is ATP synthase gamma chain.